The following is a 255-amino-acid chain: 7alpha-hydroxysteroid dehydrogenase (255 aa).

NAD(+)-binding positions include isoleucine 23, 42–43 (DI), 68–69 (DI), and asparagine 95. Residues glycine 99, serine 146, asparagine 151, and tyrosine 159 each contribute to the glycochenodeoxycholate site. NAD(+) is bound by residues tyrosine 159, lysine 163, and 192 to 194 (ILT). The active-site Proton acceptor is the tyrosine 159.

It belongs to the short-chain dehydrogenases/reductases (SDR) family. Homotetramer.

It carries out the reaction cholate + NAD(+) = 3alpha,12alpha-dihydroxy-7-oxo-5beta-cholanate + NADH + H(+). The catalysed reaction is chenodeoxycholate + NAD(+) = 7-oxolithocholate + NADH + H(+). The enzyme catalyses taurochenodeoxycholate + NAD(+) = 7-oxotaurolithocholate + NADH + H(+). It catalyses the reaction taurocholate + NAD(+) = 7-oxo-taurodeoxycholate + NADH + H(+). It carries out the reaction glycocholate + NAD(+) = 7-oxo-glycodeoxycholate + NADH + H(+). The catalysed reaction is glycochenodeoxycholate + NAD(+) = 7-oxoglycolithocholate + NADH + H(+). In terms of biological role, 7alpha-hydroxysteroid dehydrogenase involved in the metabolism of bile acids. Catalyzes the NAD(+)-dependent oxidation of the 7alpha-hydroxy group of 7alpha-hydroxysteroids, such as the major human bile acids cholate and chenodeoxycholate, to the corresponding 7-oxosteroids. To a lesser extent, can also act on taurochenodeoxycholate, taurocholate and glycocholate. Can also use glycochenodeoxycholate as substrate. Is not able to use NADP(+) instead of NAD(+) as the electron acceptor. The protein is 7alpha-hydroxysteroid dehydrogenase (hdhA) of Escherichia coli O157:H7.